Here is a 402-residue protein sequence, read N- to C-terminus: Deacetylase Oant_2987 (402 aa).

Positions 70, 72, 168, 201, 224, and 284 each coordinate Zn(2+). Position 168 is an N6-carboxylysine (K168).

The protein belongs to the metallo-dependent hydrolases superfamily. Atu3266/EF_0837 deacetylase family. Zn(2+) serves as cofactor.

Functionally, esterase that catalyzes the deacetylation of acetyl-(R)-mandelate (in vitro). Can also hydrolyze acetyl glycolate, but with lower efficiency. Has very low N-acetyl-D-amino acid deacetylase activity with N-acetyl-D-serine and N-acetyl-D-threonine (in vitro). Theoretical substrate docking studies suggest that other N-acetylated amino acids may optimally occupy the active site and may in fact be the physiological substrates. This chain is Deacetylase Oant_2987, found in Brucella anthropi (strain ATCC 49188 / DSM 6882 / CCUG 24695 / JCM 21032 / LMG 3331 / NBRC 15819 / NCTC 12168 / Alc 37) (Ochrobactrum anthropi).